A 453-amino-acid polypeptide reads, in one-letter code: Endoglucanase A (453 aa).

An N-terminal signal peptide occupies residues 1 to 26 (MNCRKYLLSGLAVFGLAATSAVAALS). Asp82 (nucleophile) is an active-site residue. A linker ('hinge') (Pro-Thr box) region spans residues 115-126 (TTPTTRKPTTTP). His417 is a catalytic residue.

It belongs to the glycosyl hydrolase 9 (cellulase E) family. Monomer.

It is found in the periplasm. The catalysed reaction is Endohydrolysis of (1-&gt;4)-beta-D-glucosidic linkages in cellulose, lichenin and cereal beta-D-glucans.. Its function is as follows. High levels of endoglucanase activity detected on acid-swollen cellulose, ball-milled cellulose, and carboxymethyl cellulose; moderate levels detected on filter paper, phosphoric acid-swollen cellulose, lichenan, and xylan. This Fibrobacter succinogenes (Bacteroides succinogenes) protein is Endoglucanase A (endA).